The sequence spans 185 residues: Elongation factor P (185 aa).

Belongs to the elongation factor P family.

It localises to the cytoplasm. It participates in protein biosynthesis; polypeptide chain elongation. In terms of biological role, involved in peptide bond synthesis. Stimulates efficient translation and peptide-bond synthesis on native or reconstituted 70S ribosomes in vitro. Probably functions indirectly by altering the affinity of the ribosome for aminoacyl-tRNA, thus increasing their reactivity as acceptors for peptidyl transferase. This Moorella thermoacetica (strain ATCC 39073 / JCM 9320) protein is Elongation factor P.